The following is a 261-amino-acid chain: MAGDSEQALPKHSPQNGQPFLIGVSGGTASGKSSVCSKIVQLLGQNEVDHHQKQVVMLSQDSFYRILTPEQKSKALKGQFNFDHPDAFDNELILKTLKELMEGKTVQIPVYDFVTHSRKEETLVVYPADVVLFEGILAFYMQEIRDMFQMKLFVDTDADTRLSRRVLRDINERGRDLEQVLTQYITFVKPAFEEFCLPTKKYADVIIPRGADNVVAINLIVQHIQDILNGGLTKRQTNGYTNGFTSPRTRHPSDSNSSRPH.

The segment at 1-24 (MAGDSEQALPKHSPQNGQPFLIGV) is disordered. 26–34 (GGTASGKSS) is an ATP binding site. Residues Asp83, Tyr111, His116, Arg165, Arg175, and Gln183 each contribute to the substrate site. Asp212 is an ATP binding site. The segment covering 238–247 (NGYTNGFTSP) has biased composition (polar residues). The interval 238 to 261 (NGYTNGFTSPRTRHPSDSNSSRPH) is disordered.

The protein belongs to the uridine kinase family. Homotetramer.

The catalysed reaction is uridine + ATP = UMP + ADP + H(+). It catalyses the reaction cytidine + ATP = CMP + ADP + H(+). Its pathway is pyrimidine metabolism; CTP biosynthesis via salvage pathway; CTP from cytidine: step 1/3. The protein operates within pyrimidine metabolism; UMP biosynthesis via salvage pathway; UMP from uridine: step 1/1. In terms of biological role, phosphorylates uridine and cytidine to uridine monophosphate and cytidine monophosphate. Does not phosphorylate deoxyribonucleosides or purine ribonucleosides. Can use ATP or GTP as a phosphate donor. This chain is Uridine-cytidine kinase 2 (uck2), found in Xenopus tropicalis (Western clawed frog).